We begin with the raw amino-acid sequence, 321 residues long: LIMR family protein SELMODRAFT_432210 (321 aa).

Helical transmembrane passes span 28–48 (KQLWWVVYIIDTVLVYLVIPF), 116–133 (CFSLSSNVTLMLIRLDLW), 139–159 (LCVFPTYVIALSILFTMFGGV), 240–260 (LVFGILGLALSIIWLLHILVF), and 284–304 (LLGTTPFAIFCYYFVMSVISG).

It belongs to the LIMR family.

It localises to the membrane. This chain is LIMR family protein SELMODRAFT_432210, found in Selaginella moellendorffii (Spikemoss).